The chain runs to 122 residues: Iron-sulfur cluster insertion protein ErpA (122 aa).

Residues cysteine 50, cysteine 114, and cysteine 116 each coordinate iron-sulfur cluster.

This sequence belongs to the HesB/IscA family. In terms of assembly, homodimer. Requires iron-sulfur cluster as cofactor.

In terms of biological role, required for insertion of 4Fe-4S clusters for at least IspG. The chain is Iron-sulfur cluster insertion protein ErpA from Alkalilimnicola ehrlichii (strain ATCC BAA-1101 / DSM 17681 / MLHE-1).